Reading from the N-terminus, the 493-residue chain is Cytochrome P450 monooxygenase mfmF (493 aa).

Transmembrane regions (helical) follow at residues 3–23 (SLIP…RLFF) and 301–321 (VLFA…FHLV). Cysteine 440 serves as a coordination point for heme.

Belongs to the cytochrome P450 family. The cofactor is heme.

It is found in the membrane. The protein operates within secondary metabolite biosynthesis; terpenoid biosynthesis. Cytochrome P450 monooxygenase; part of the gene cluster that mediates the biosynthesis of the phthalide-terpenoid hybrid 11'-O-desmethylfendlerol. Within the pathway, mfmF catalyzes C-3 hydroxylation of 5-hydroxy-4-(hydroxymethyl)-7-methoxy-6-methylphthalide to yield cyclopolic acid. The biosynthesis of 11'-O-desmethylfendlerol begins with the NR-PKS mfmB that forms 3,5-dimethylorsellinic acid (DMOA), which is then transformed into the phthalide 5,7-dihydroxy-4-(hydroxymethyl)-6-methylphthalide by the cytochrome P450 monooxygenase mfmA and the hydrolase mfmC. Subsequently, the methyltransferase mfmE catalyzes 7-O-methylation to yield 5-hydroxy-4-(hydroxymethyl)-7-methoxy-6-methylphthalide, which undergoes C-3 hydroxylation by the cytochrome P450 monooxygenase mfmF. The resultant cyclopolic acid (2,5-dihydroxy-4-(hydroxymethyl)-7-methoxy-6-methylphthalide) is then farnesylated by the DMATS-type prenyltransferase mfmD to afford 5-O-farnesylcyclopolic acid. Finally, the Pyr4-family terpene cyclase mfmH cyclizes the farnesyl moiety of 5-O-farnesylcyclopolic acid into a drimane-like structure, thus completing the biosynthesis of 11'-O-desmethylfendlerol. This chain is Cytochrome P450 monooxygenase mfmF, found in Annulohypoxylon moriforme (Filamentous fungus).